Reading from the N-terminus, the 328-residue chain is Serine/threonine protein kinase RdoA (328 aa).

The Proton acceptor role is filled by Asp-201. Residues Asn-206 and Asp-217 each coordinate Mg(2+). Asp-217 is an active-site residue.

Belongs to the SrkA/RdoA protein kinase family. Monomer. The cofactor is Mg(2+).

The protein resides in the cytoplasm. The enzyme catalyses L-seryl-[protein] + ATP = O-phospho-L-seryl-[protein] + ADP + H(+). It carries out the reaction L-threonyl-[protein] + ATP = O-phospho-L-threonyl-[protein] + ADP + H(+). Its function is as follows. A protein kinase that (auto)phosphorylates on Ser and Thr residues, probably involved in the extracytoplasmic stress response. Probably acts to suppress the effects of stress linked to accumulation of reactive oxygen species. This is Serine/threonine protein kinase RdoA from Salmonella typhimurium (strain LT2 / SGSC1412 / ATCC 700720).